A 1269-amino-acid chain; its full sequence is MVRLREIPRTAAFAWSPDTSAPIVVTGTRAGAVDADFSDETKLELWDLKLDDEGQGLELQPIASISADSRFFDIAWGPPNEDHPRGIIAGALENGSLDLWDAEKLLSGASDAHMSRTTKHTGAIKSLQFNPLKPQILATAGTKGELFIYDVNDISNPFRLGTAAARSDDLECVAWNRKVPHILATGGSGGFVTVWDLKTRKASLTLNNSRKAVSAIAWDPNNSTKLLTATPDDTMPVIFLWDLRNSNAPERTLQGHEQGVLSVSWCQQDSDLLISCGKDNRTIVWNPQTGERYGEFPEVTNWTFSARFNPTNPNLSATASFDGKITIQTLQNTNPSATQAAAQNSLDGEDFFTKAQTQPQGASFTLTKAPLWYQRPVGASFGFGGKVVVFKQTQTAPGQPRASEISISHFSVDSEIGSATEKFEESIKAGDLKSICQSHLENAKSEDETTAWKVMETLVAENPRKQVVEYLGLSAEEAPASPESTTEEGAEKEDAEVEPVKESFKKHKKNRLSTFFTEGGDGDDFLAGLAATKGAKTDSPFHLLREGNTGLEDSVTRAIMLGNFAKAVEICIKADRIADAFLIANCGGKELVDQVQTAYISAKKGSPSYLRLLGSVINDNLWDVVYNADIADWKETMATLCTFAKPEEFPDLCEALGDRLFETGSRQDASFCFLVGSKLEKVVGIWIDALEEAEKNEIQEAEADNTFSVHARSLQQLIEKVTVFRHVTKFQDAEASKTSDWKLASLYDKYIEYADIVAAHGQLSIAQKYLELVPASYSGAEVARKRLQLATTKSGAQPAAARAQQAPAAARLPTRQQPVGYQPPQQQPMSTPYGMPPAPQAQTPAANPYGPPAPSPYAPAGATPYQPQQTSYAPPQPAGGAGAYGPTPGVGYGQPQQNFGAPPPPRNATPSALPPSRTVDAGSWNDVPMVTKAPPPRRSTPSVAPVPSPFANQQAGMAPPPQSPYLGQRGTATPPPPPPKAGQGPPRMASPLTSPPQAGYGGAAPPRPASAASSTYAPPPPAPGQSFGMNAPPARTASPYSVAPAAPPPSNRYAPSPAMQQQQGGPGPAGSMPPPPAMSRPPPTNPYAAAPQQSPAPGGQYAPSPYGAPPQAGQPPMAPPPSSQVGPPPGGRGPLSTPTPPPPRAAAAPPAKTKYPPGDRSHIPASAQQLVEILSRDMERVAAKAPASFAPHVKDTQKRLNYLFDHLNNEELVKPDTIGQLNTLAQAIEAKDYAGAQQLQIKIQTEKTEECGQWIVGVKRLISMSKATP.

WD repeat units follow at residues 5 to 47, 66 to 110, 119 to 159, 165 to 205, 208 to 251, 255 to 295, and 298 to 338; these read REIP…ELWD, SADS…SGAS, KHTG…NPFR, ARSD…ASLT, NSRK…APER, GHEQ…RYGE, and EVTN…PSAT. A WD 8; interaction with SEC13 repeat occupies 380–408; it reads SFGFGGKVVVFKQTQTAPGQPRASEISIS. 2 disordered regions span residues 474–503 and 792–1162; these read SAEEAPASPESTTEEGAEKEDAEVEPVKES and TKSG…DRSH. A compositionally biased stretch (acidic residues) spans 485–497; that stretch reads TTEEGAEKEDAEV. Over residues 796 to 828 the composition is skewed to low complexity; sequence AQPAAARAQQAPAAARLPTRQQPVGYQPPQQQP. Gly residues predominate over residues 879–892; the sequence is GGAGAYGPTPGVGY. Positions 933 to 948 are enriched in pro residues; the sequence is APPPRRSTPSVAPVPS. A compositionally biased stretch (low complexity) spans 1054-1063; it reads APSPAMQQQQ. Residues 1071–1085 show a composition bias toward pro residues; the sequence is SMPPPPAMSRPPPTN. The span at 1086-1105 shows a compositional bias: low complexity; that stretch reads PYAAAPQQSPAPGGQYAPSP. Over residues 1106–1144 the composition is skewed to pro residues; sequence YGAPPQAGQPPMAPPPSSQVGPPPGGRGPLSTPTPPPPR. A compositionally biased stretch (low complexity) spans 1145 to 1156; the sequence is AAAAPPAKTKYP.

Belongs to the WD repeat SEC31 family. The COPII coat is composed of at least 5 proteins: the SEC23/24 complex, the SEC13/31 complex, and the protein SAR1. SEC13 and SEC31 make a 2:2 tetramer that forms the edge element of the COPII outer coat. The tetramer self-assembles in multiple copies to form the complete polyhedral cage. Interacts (via WD 8) with SEC13.

Its subcellular location is the cytoplasmic vesicle. It localises to the COPII-coated vesicle membrane. The protein resides in the endoplasmic reticulum membrane. Its function is as follows. Component of the coat protein complex II (COPII) which promotes the formation of transport vesicles from the endoplasmic reticulum (ER). The coat has two main functions, the physical deformation of the endoplasmic reticulum membrane into vesicles and the selection of cargo molecules. The polypeptide is Protein transport protein SEC31 (SEC31) (Pyricularia oryzae (strain 70-15 / ATCC MYA-4617 / FGSC 8958) (Rice blast fungus)).